A 405-amino-acid chain; its full sequence is Acetate kinase (405 aa).

Residue Asn-7 coordinates Mg(2+). Lys-14 contacts ATP. A substrate-binding site is contributed by Arg-91. Asp-148 functions as the Proton donor/acceptor in the catalytic mechanism. ATP contacts are provided by residues 208-212 (HLGNG) and 283-285 (DFR). Residue Glu-384 participates in Mg(2+) binding.

It belongs to the acetokinase family. As to quaternary structure, homodimer. The cofactor is Mg(2+). Requires Mn(2+) as cofactor.

Its subcellular location is the cytoplasm. The catalysed reaction is acetate + ATP = acetyl phosphate + ADP. The protein operates within metabolic intermediate biosynthesis; acetyl-CoA biosynthesis; acetyl-CoA from acetate: step 1/2. Its function is as follows. Catalyzes the formation of acetyl phosphate from acetate and ATP. Can also catalyze the reverse reaction. This chain is Acetate kinase, found in Dictyoglomus turgidum (strain DSM 6724 / Z-1310).